The following is a 65-amino-acid chain: Large ribosomal subunit protein bL35 (65 aa).

Positions 1–26 are enriched in basic residues; sequence MPKIKTHRGAAKRFSKTGTGKIKRSH. The disordered stretch occupies residues 1-41; it reads MPKIKTHRGAAKRFSKTGTGKIKRSHAFTSHILTSKTRKNK.

This sequence belongs to the bacterial ribosomal protein bL35 family.

The polypeptide is Large ribosomal subunit protein bL35 (Geotalea daltonii (strain DSM 22248 / JCM 15807 / FRC-32) (Geobacter daltonii)).